Consider the following 615-residue polypeptide: MSSASTPTAPYLEDLVRNSLDQNLPWVVQKYGGTSVGKSLDNITKIVGSYIDNGSKVAIVCSARSTQTKSLGTTNLLLQASREALQPAMSSSGDGRSGSMSGTATPFYPKRVGSGFFGKDQSTSMTSSVSSLSQLESQLGRSGSPSPFQSSSSRSPPRSPATPSQDSSISQEPAFHATVDLIKKGHLEAARASLKGGPLRDELEEEIERDCESLRSFLYAAQIIDEISPRSQDSIVGTGERLACKIVAAALRDRGVDSELVVLDNIVDASMSAASEAVSVDAGDQGVAQLGQEFYDQLSFRLGERLRECGQRVPVVTGYFGPVPGSLLAQIGRGYTDLCAALCAVGLKASELQVWKEVDGIFTADPRKVPSARLVPIITPDEAAELTYYGSEVIHPFTMEQVIRARIPIRIKNVENPSGAGTVIYPDVGFPRGLDTEPPKAERIVEGVDERMPTAVTIKDEIIVLNIHSNRKTLSHGFLARIFGTLDRAGVVVDLISTSEVHVSMAMQDFLNRKRLERLVKDLEKIGEVTVSKDMAILSLVGRNMRNAIGSAGLMFASLARAMINIEMISQGASEINISCVIENKDAIKALNVIHESCLSYPRSPATEMAGLQLQ.

2 disordered regions span residues 84–105 and 127–171; these read ALQP…GTAT and SSVS…SISQ. Low complexity-rich tracts occupy residues 90–102 and 127–164; these read SSSG…SMSG and SSVS…ATPS. An ACT domain is found at 467–537; sequence IHSNRKTLSH…EVTVSKDMAI (71 aa).

The protein belongs to the aspartokinase family.

The enzyme catalyses L-aspartate + ATP = 4-phospho-L-aspartate + ADP. Its pathway is amino-acid biosynthesis; L-methionine biosynthesis via de novo pathway; L-homoserine from L-aspartate: step 1/3. It participates in amino-acid biosynthesis; L-threonine biosynthesis; L-threonine from L-aspartate: step 1/5. Functionally, phosphorylates aspartate, the first step in the biosynthesis of amino acids that derive from aspartate (the aspartate family of amino acids), including methioinine and threonine, the latter of which is a precursor to isoleucine. This Cryptococcus neoformans var. grubii serotype A (strain H99 / ATCC 208821 / CBS 10515 / FGSC 9487) (Filobasidiella neoformans var. grubii) protein is Aspartokinase.